An 85-amino-acid chain; its full sequence is MISFKTVIVCLFLWVVIIGARHRPVKLDDEIFRDYHIDIDPSKSSCRCDDDGAEGSGTVWYGNCPSGWAMCTSSHYSAFAECCKQ.

The N-terminal stretch at 1-20 (MISFKTVIVCLFLWVVIIGA) is a signal peptide. Disulfide bonds link Cys-46–Cys-82, Cys-48–Cys-71, and Cys-64–Cys-83.

Its function is as follows. Probable toxin. The polypeptide is N.vectensis toxin 6 (Nematostella vectensis (Starlet sea anemone)).